Consider the following 257-residue polypeptide: OCIA domain-containing protein 1 (257 aa).

Disordered stretches follow at residues 1 to 20 and 148 to 257; these read MDSP…PHPL and YSDE…SWTD. The region spanning 1–110 is the OCIA domain; sequence MDSPLNDGSH…MRLPNSHLGE (110 aa). Residues 156-170 are compositionally biased toward polar residues; sequence GRSTSLNLDTESRPT. Positions 204–216 are enriched in basic and acidic residues; the sequence is EDLRRRNREEYSK.

Belongs to the OCIAD1 family. In terms of assembly, interacts with STAT3 and ARF1. Expressed in all cells of the primary lymph gland lobe.

It is found in the endosome. Functionally, maintains stem cell potency. Involved in endocytic pathways that mediate signaling during hematopoiesis. The chain is OCIA domain-containing protein 1 (asrij) from Drosophila melanogaster (Fruit fly).